Consider the following 360-residue polypeptide: RNA-binding protein 1 (360 aa).

The region spanning 6 to 82 is the RRM 1 domain; it reads YKLFVGGIAK…KPVDVRKAIR (77 aa). Residues 93–113 adopt a coiled-coil conformation; that stretch reads MQFLERKVQQMNGGLREMSSN. In terms of domain architecture, RRM 2 spans 120 to 197; sequence KKIFVGGLSS…KRVEVKRAIP (78 aa).

In terms of tissue distribution, highly expressed in inflorescences and roots. Detected in leaves and seedlings, but not in stems. Expressed in vegetative shoot apex and root meristem, but not in root cap. Detected in flower buds, junction of pedicels, joints of immature siliques and pistil.

In terms of biological role, RNA binding protein. Can also bind in vitro to single-stranded DNA. This Arabidopsis thaliana (Mouse-ear cress) protein is RNA-binding protein 1 (RBP1).